The sequence spans 123 residues: Methylmalonyl-CoA carboxyltransferase 1.3S subunit (123 aa).

Positions 46 to 123 (GAGAGKAGEG…QGGQGLIKIG (78 aa)) constitute a Biotinyl-binding domain. The residue at position 89 (Lys89) is an N6-biotinyllysine.

Transcarboxylase is composed of three subunits: 1.3S, 5S, and 12S. The core of the enzyme is composed of six 12S subunits. On each side of the core there are three pairs of 5S subunits. Each 5S dimer is attached to the core by two 1.3S subunits. Thus the total number of chains is 30 (6 + 12 + 12).

It carries out the reaction (S)-methylmalonyl-CoA + pyruvate = propanoyl-CoA + oxaloacetate. Functionally, the biotinyl 1.3S subunit serves as a carboxyl carrier between the substrate-binding sites on the 12S and 5S subunits. The sequence is that of Methylmalonyl-CoA carboxyltransferase 1.3S subunit from Propionibacterium freudenreichii subsp. shermanii.